A 272-amino-acid polypeptide reads, in one-letter code: 2,3,4,5-tetrahydropyridine-2,6-dicarboxylate N-succinyltransferase (272 aa).

Substrate-binding residues include R104 and D141.

The protein belongs to the transferase hexapeptide repeat family. As to quaternary structure, homotrimer.

The protein resides in the cytoplasm. The enzyme catalyses (S)-2,3,4,5-tetrahydrodipicolinate + succinyl-CoA + H2O = (S)-2-succinylamino-6-oxoheptanedioate + CoA. The protein operates within amino-acid biosynthesis; L-lysine biosynthesis via DAP pathway; LL-2,6-diaminopimelate from (S)-tetrahydrodipicolinate (succinylase route): step 1/3. The sequence is that of 2,3,4,5-tetrahydropyridine-2,6-dicarboxylate N-succinyltransferase from Alkalilimnicola ehrlichii (strain ATCC BAA-1101 / DSM 17681 / MLHE-1).